The chain runs to 890 residues: Alanine--tRNA ligase (890 aa).

4 residues coordinate Zn(2+): H573, H577, C675, and H679.

It belongs to the class-II aminoacyl-tRNA synthetase family. The cofactor is Zn(2+).

The protein localises to the cytoplasm. It carries out the reaction tRNA(Ala) + L-alanine + ATP = L-alanyl-tRNA(Ala) + AMP + diphosphate. In terms of biological role, catalyzes the attachment of alanine to tRNA(Ala) in a two-step reaction: alanine is first activated by ATP to form Ala-AMP and then transferred to the acceptor end of tRNA(Ala). Also edits incorrectly charged Ser-tRNA(Ala) and Gly-tRNA(Ala) via its editing domain. This Streptomyces avermitilis (strain ATCC 31267 / DSM 46492 / JCM 5070 / NBRC 14893 / NCIMB 12804 / NRRL 8165 / MA-4680) protein is Alanine--tRNA ligase.